A 273-amino-acid polypeptide reads, in one-letter code: Phycobilisome 32.1 kDa linker polypeptide, phycocyanin-associated, rod 2 (273 aa).

Residues 1–180 enclose the PBS-linker domain; the sequence is MTSLVSAQRL…VYRGYATSDR (180 aa). A CpcD-like domain is found at 220–273; that stretch reads NQMYRLQVIQGAAPGRGTRVRRGKAEYLVSYDNLSAKLQQINRQGDTVTMISLA.

It belongs to the phycobilisome linker protein family. In terms of assembly, part of 2 PBS rod complexes, the conventional CpcG-PBS rod and a photosystem I-specific CpcL-PBS rod, both of which include ferredoxin--NADP reductase (petH). CpcG-PBS has on average 3 stacked phycocyanin hexamers (PC, CpcA and CpcB). Linker CpcG connects the PC stack to the thylakoid, the hexamers are linked by 1 copy of CpcC1, 1 copy of CpcC2 and the stack is terminated by a single copy of CpcD. The CpcL-PBS has on average 5 stacked phycocyanin hexamers (PC, CpcA and CpcB). Linker CpcL connects the PC stack to the thylakoid, the hexamers are linked by 1 copy of CpcC1, 3 copies of CpcC2 and the stack is terminated by a single copy of CpcD. Interacts with the C-phycocyanin (PC) beta subunit (cpcB), it may fit into the center of the PC hexamer.

The protein localises to the cellular thylakoid membrane. Rod linker protein, associated with phycocyanin. Linker polypeptides determine the state of aggregation and the location of the disk-shaped phycobiliprotein units within the phycobilisome and modulate their spectroscopic properties in order to mediate a directed and optimal energy transfer. In Synechocystis sp. (strain ATCC 27184 / PCC 6803 / Kazusa), this protein is Phycobilisome 32.1 kDa linker polypeptide, phycocyanin-associated, rod 2 (cpcC2).